A 110-amino-acid chain; its full sequence is Chorion class B protein M2410 (110 aa).

A run of 4 repeats spans residues 1–4 (YGGL), 5–9 (GYGGL), 10–14 (GYGGL), and 15–19 (GYGGL). The tract at residues 1 to 19 (YGGLGYGGLGYGGLGYGGL) is 4 X 5 AA tandem repeats of G-Y-G-G-L. The segment at 1–27 (YGGLGYGGLGYGGLGYGGLGGGCGRGF) is left arm. The interval 28 to 96 (SGGGLPVATA…GNGDVGITRE (69 aa)) is central domain. The segment at 97 to 110 (GGLGYGAGYGGGYG) is right arm (Gly-rich tandem repeats).

This sequence belongs to the chorion protein family.

Functionally, this protein is one of many from the eggshell of the silk moth. This Bombyx mori (Silk moth) protein is Chorion class B protein M2410.